The chain runs to 243 residues: MRTPMNNDISGRPDSLNGDRSDVFSPELGEFPNADDRANDIGDMETKTGTTTVGLKTQDGTVLATDMRASLGRMVSSKDVQKVEEIHPTGALTIAGSVSAAQSLISSIRAEVRLYEARRGEDMSMEALSTLLGNFLRSGGFFIVQPILGGVDDDGPHIYSIDPAGSIIEEEYTVTGSGSQYALGVLEQQYNEDLSIEEAKTVAARSIESAVERDLASGNGINVCVVTEDGVEITQHEDFEELV.

Residues 1–40 (MRTPMNNDISGRPDSLNGDRSDVFSPELGEFPNADDRAND) form a disordered region. Positions 1 to 49 (MRTPMNNDISGRPDSLNGDRSDVFSPELGEFPNADDRANDIGDMETKTG) are cleaved as a propeptide — removed in mature form; by autocatalysis. Thr50 (nucleophile) is an active-site residue.

Belongs to the peptidase T1B family. In terms of assembly, the 20S proteasome core is composed of 14 alpha and 14 beta subunits that assemble into four stacked heptameric rings, resulting in a barrel-shaped structure. The two inner rings, each composed of seven catalytic beta subunits, are sandwiched by two outer rings, each composed of seven alpha subunits. The catalytic chamber with the active sites is on the inside of the barrel. Has a gated structure, the ends of the cylinder being occluded by the N-termini of the alpha-subunits. Is capped at one or both ends by the proteasome regulatory ATPase, PAN.

The protein resides in the cytoplasm. It carries out the reaction Cleavage of peptide bonds with very broad specificity.. With respect to regulation, the formation of the proteasomal ATPase PAN-20S proteasome complex, via the docking of the C-termini of PAN into the intersubunit pockets in the alpha-rings, triggers opening of the gate for substrate entry. Interconversion between the open-gate and close-gate conformations leads to a dynamic regulation of the 20S proteasome proteolysis activity. Functionally, component of the proteasome core, a large protease complex with broad specificity involved in protein degradation. This is Proteasome subunit beta from Haloquadratum walsbyi (strain DSM 16790 / HBSQ001).